The following is a 593-amino-acid chain: MYKNQLQELAQRSCFNLPSYACIREGPDHAPRFKATVNFNGETFESPAFCSTLRLAEHAAAEVALNELSKRGPSSSLAAKVLDETGIYKNLLQETAHRAGLKLPVYTTIRSGPGHTPVFTCTVELAGMTFTGNPGKTKKQAQKNAAMAAWSELKQLPRVGEPSSSSCPPDHDDDDQEQIIVARTLASLNQTNGGKTPQQKEKQQSSNRPSSRRPSYPKSNASFYGRLHLQKHAYPSVPPEQAMYHMWHQVQATQQKPHFPMVPTMGSTGFPPPPTVLHMYPPPRGQFTMPSSQDGLGLIPCYPEASPVLPRYFSPYPASFVPRRPLPVNVHKIHEKRLVGADMVELPDAAVFSRYTAPDFSGTSENAVQDNKKEEYTESSPASEQESKSHTASSSATRSPSQQLESNQDIEIMGGLRLESKKPAEQPPESSPSRVNPVLLCETGQRHHYSSVRHGDPVHRNSPQISVATSPSPIRRGDPAHINIPQISVATPPECRSPRAQAPPRFGTRMPVNLPSSLYQQRPPWLAASVTIRTTIPVCSARPNVVNSSAGAAQPAVQILSASPRKEEPEARTNTSDTSNAATASSELNKLHI.

2 consecutive DRBM domains span residues M1–K70 and I87–Q155. Residues L188–P197 show a composition bias toward polar residues. Disordered stretches follow at residues L188–A221, A357–Q408, and V546–I593. Residues S205 to S219 show a composition bias toward low complexity. Residues E378 to Q408 show a composition bias toward polar residues. The span at R572–S586 shows a compositional bias: low complexity.

Functionally, binds double-stranded RNA. In Oryza sativa subsp. japonica (Rice), this protein is Double-stranded RNA-binding protein 2 (DRB2).